The sequence spans 262 residues: Glucosamine-6-phosphate deaminase (262 aa).

The Proton acceptor; for enolization step role is filled by Asp-63. The active-site For ring-opening step is the Asn-129. His-131 functions as the Proton acceptor; for ring-opening step in the catalytic mechanism. Glu-136 acts as the For ring-opening step in catalysis.

It belongs to the glucosamine/galactosamine-6-phosphate isomerase family. NagB subfamily.

It carries out the reaction alpha-D-glucosamine 6-phosphate + H2O = beta-D-fructose 6-phosphate + NH4(+). Its pathway is amino-sugar metabolism; N-acetylneuraminate degradation; D-fructose 6-phosphate from N-acetylneuraminate: step 5/5. Its function is as follows. Catalyzes the reversible isomerization-deamination of glucosamine 6-phosphate (GlcN6P) to form fructose 6-phosphate (Fru6P) and ammonium ion. This is Glucosamine-6-phosphate deaminase from Bacillus cereus (strain ZK / E33L).